The sequence spans 401 residues: Multidrug resistance protein MdtH (401 aa).

Transmembrane regions (helical) follow at residues 13 to 33 (YFLL…FPLI), 34 to 54 (SIRF…ALGL), 99 to 116 (PWIL…GTLF), 139 to 159 (LLMM…SWLL), 165 to 185 (FVCW…AWLL), 214 to 234 (VLTL…LPIV), 243 to 263 (AAVK…LYPL), 277 to 297 (LMAG…ITHL), 299 to 319 (TLFM…PARE), 340 to 360 (LGLA…YDTG), and 368 to 388 (LPWF…YWQF).

It belongs to the major facilitator superfamily. DHA1 family. MdtH (TC 2.A.1.2.21) subfamily.

The protein resides in the cell inner membrane. The polypeptide is Multidrug resistance protein MdtH (Yersinia pseudotuberculosis serotype O:1b (strain IP 31758)).